The primary structure comprises 129 residues: Protein Turandot B1 (129 aa).

The N-terminal stretch at 1–21 (MNSATSLMCFALLLISPLCMG) is a signal peptide.

Belongs to the Turandot family.

It is found in the secreted. In terms of biological role, a humoral factor that may play a role in stress tolerance. The polypeptide is Protein Turandot B1 (TotB1) (Drosophila erecta (Fruit fly)).